A 56-amino-acid chain; its full sequence is Cruciferin (56 aa).

Threonine 45 carries the phosphothreonine modification.

The protein belongs to the 11S seed storage protein (globulins) family. In terms of assembly, hexamer; each subunit is composed of an acidic and a basic chain derived from a single precursor and linked by a disulfide bond.

Its function is as follows. This is a seed storage protein. The polypeptide is Cruciferin (Sinapis alba (White mustard)).